A 40-amino-acid chain; its full sequence is Putative protein FAM86JP (40 aa).

Positions 1 to 40 are disordered; the sequence is MPGAFSQNSSKRRAVLPRSHRVAGRGPAEAGCLPGAPAGS. Basic residues predominate over residues 10-23; the sequence is SKRRAVLPRSHRVA.

The polypeptide is Putative protein FAM86JP (Homo sapiens (Human)).